The following is a 266-amino-acid chain: PDZ domain-containing protein 9 (266 aa).

In terms of domain architecture, PDZ spans 27-109 (KVIQTKLTVG…GTVLQIKAYR (83 aa)).

This chain is PDZ domain-containing protein 9 (Pdzd9), found in Mus musculus (Mouse).